The sequence spans 255 residues: Complement C1q-like protein 3 (255 aa).

A signal peptide spans 1–20; that stretch reads MVLLLVILIPVLVSSAGTSA. Residues 39 to 109 form a disordered region; it reads KAPSTAATPD…GLPGPPGAPG (71 aa). One can recognise a Collagen-like domain in the interval 61-111; that stretch reads GPKGEAGRPGKAGPRGPPGEPGPPGPVGPPGEKGEPGRQGLPGPPGAPGLN. The segment covering 75–89 has biased composition (pro residues); that stretch reads RGPPGEPGPPGPVGP. Residues 122–255 form the C1q domain; the sequence is STVPKIAFYA…TFSGFIIYAD (134 aa).

As to quaternary structure, forms homooligomers. Interacts with ADGRB3. Forms heterooligomers with C1QL2 and C1QL4, when proteins are coexpressed; this interaction does not occur after secretion. In terms of tissue distribution, highly expressed in brain and white adipose tissue. In gonadal fat pad, expressed at lower levels in adipocytes than in the stromal vascular fraction (VSP), which contains preadipocytes, fibroblasts, endothelial cells and occasional immune cells. Expression exhibits sexually dimorphism, with higher levels in females than in males (at protein level). Tends to be up-regulated in adipose tissue from obese males, but not females. Expressed in glial cells.

Its subcellular location is the secreted. May regulate the number of excitatory synapses that are formed on hippocampus neurons. Has no effect on inhibitory synapses. Plays a role in glucose homeostasis. Via AMPK signaling pathway, stimulates glucose uptake in adipocytes, myotubes and hepatocytes and enhances insulin-stimulated glucose uptake. In a hepatoma cell line, reduces the expression of gluconeogenic enzymes G6PC1 and PCK1 and hence decreases de novo glucose production. The chain is Complement C1q-like protein 3 (C1ql3) from Mus musculus (Mouse).